A 108-amino-acid chain; its full sequence is uncharacterized protein (108 aa).

The interval 75-94 (TPQVSSFPSSTTSLSHSCTT) is disordered. Residues 79–94 (SSFPSSTTSLSHSCTT) show a composition bias toward low complexity.

This is an uncharacterized protein from Homo sapiens (Human).